The sequence spans 127 residues: MDLDLIQDLPILNFPPAIKIRANTNRDDDGGGCTTPTSSDHKIPPTTATTPPPPPQKPRPPSTPSSLGIRSCKRKLMTSLSKYEIIVNKDEIERFFSSVYNQTMASSTTTAITVAKRRRSFRSCSRR.

A disordered region spans residues 21–71; it reads RANTNRDDDGGGCTTPTSSDHKIPPTTATTPPPPPQKPRPPSTPSSLGIRS. Positions 50–63 are enriched in pro residues; that stretch reads TPPPPPQKPRPPST.

In terms of assembly, interacts with CDKA-1. Interacts with CYCD2-1, CYCD3-2 and CYCD4-1. Interacts with CDKB1-1. Interacts with CPR5. In terms of tissue distribution, expressed in the shoot apical meristem, leaf primordia and the elongation zone of the root.

It localises to the nucleus. Its function is as follows. Cyclin-dependent protein kinase (CDK) inhibitor that functions as a repressor of mitosis in the endoreduplication cell cycle. Inhibits the kinase activity of CYCD3-1/CDKA-1, CYCD2-1/CDKA-1 and CYCB1-1/CDKB1-1 complexes in a dose dependent manner. Cooperates with SMR1 and SMR2 to promote endoreplication during leaf development. Required for normal trichome endoreplicating cell cycles. Positive regulator of effector-triggered immunity (ETI). The sequence is that of Cyclin-dependent protein kinase inhibitor SIM from Arabidopsis thaliana (Mouse-ear cress).